We begin with the raw amino-acid sequence, 357 residues long: Ribosomal RNA large subunit methyltransferase M (357 aa).

S-adenosyl-L-methionine-binding positions include serine 183, 216-219 (APGG), aspartate 235, aspartate 255, and aspartate 271. Residue lysine 300 is the Proton acceptor of the active site.

Belongs to the class I-like SAM-binding methyltransferase superfamily. RNA methyltransferase RlmE family. RlmM subfamily. As to quaternary structure, monomer.

It localises to the cytoplasm. It carries out the reaction cytidine(2498) in 23S rRNA + S-adenosyl-L-methionine = 2'-O-methylcytidine(2498) in 23S rRNA + S-adenosyl-L-homocysteine + H(+). In terms of biological role, catalyzes the 2'-O-methylation at nucleotide C2498 in 23S rRNA. This chain is Ribosomal RNA large subunit methyltransferase M, found in Pseudomonas syringae pv. tomato (strain ATCC BAA-871 / DC3000).